The chain runs to 639 residues: ATP-dependent zinc metalloprotease FtsH (639 aa).

Residues 1–20 (MNGNNNMNNNGKSNNKKKNK) are Cytoplasmic-facing. Residues 21-41 (NWILGLVVVFLISAIFMSYFI) traverse the membrane as a helical segment. The Periplasmic segment spans residues 42 to 120 (RGGESYKNVP…LSSGKSQASL (79 aa)). Residues 121–141 (IGVLLQTLPWILFFIFFFFIF) traverse the membrane as a helical segment. The Cytoplasmic segment spans residues 142–639 (RQTQGGGGKV…KEVKGEDVKG (498 aa)). 212-219 (GSPGTGKT) serves as a coordination point for ATP. A Zn(2+)-binding site is contributed by His-434. Glu-435 is an active-site residue. His-438 and Asp-510 together coordinate Zn(2+).

This sequence in the central section; belongs to the AAA ATPase family. In the C-terminal section; belongs to the peptidase M41 family. As to quaternary structure, homohexamer. Zn(2+) is required as a cofactor.

The protein resides in the cell inner membrane. Acts as a processive, ATP-dependent zinc metallopeptidase for both cytoplasmic and membrane proteins. Plays a role in the quality control of integral membrane proteins. In Borreliella burgdorferi (strain ZS7) (Borrelia burgdorferi), this protein is ATP-dependent zinc metalloprotease FtsH.